Consider the following 1460-residue polypeptide: Centrosomal protein of 164 kDa (1460 aa).

The segment at Met-1–Tyr-194 is interaction with ATRIP. In terms of domain architecture, WW spans Ala-56 to Asp-89. A disordered region spans residues Gly-107–Ser-135. Residues Ile-109–Lys-119 are compositionally biased toward basic residues. Residue Ser-186 is modified to Phosphoserine; by ATR and ATM. Ser-201 is modified (phosphoserine). Disordered stretches follow at residues Gly-213 to Asp-412, Ala-440 to Lys-593, and Glu-658 to Arg-719. Residues Glu-217–Asp-227 show a composition bias toward acidic residues. The span at Glu-256–Ser-270 shows a compositional bias: basic and acidic residues. Low complexity predominate over residues Ser-285 to Ala-296. 2 stretches are compositionally biased toward basic and acidic residues: residues Leu-310 to Ile-323 and Glu-357 to Glu-367. Over residues Gln-453 to Ser-464 the composition is skewed to low complexity. The segment covering Lys-465–Ala-481 has biased composition (basic and acidic residues). The span at Ser-514 to Gln-525 shows a compositional bias: low complexity. Basic and acidic residues predominate over residues Glu-537–Ala-546. Ser-566 bears the Phosphoserine mark. Composition is skewed to basic and acidic residues over residues Glu-658–Gln-668 and Asp-686–Arg-719. Residues Gly-1154 to Asp-1206 are a coiled coil. The segment at Pro-1290–Pro-1310 is disordered. Phosphoserine occurs at positions 1386, 1388, and 1443.

As to quaternary structure, interacts (via N-terminus) with ATRIP. Interacts with ATM, ATR and MDC1. Interacts with XPA (via N-terminus) upon UV irradiation. Interacts with CEP83, CCDC92, TTBK2, DVL3, NPHP3 and weakly with NPHP4. Interacts with DZIP1. Post-translationally, phosphorylation at Ser-186 is induced upon DNA-damage caused by treatment with IR irradiation, UV irradiation, hydroxyurea or amphidicolin. Also MDC1-mediated chromatin remodeling is critical for DNA damage-induced phosphorylation. In terms of tissue distribution, expressed in several cell lines.

The protein resides in the cytoplasm. The protein localises to the cytoskeleton. Its subcellular location is the microtubule organizing center. It is found in the centrosome. It localises to the centriole. The protein resides in the nucleus. In terms of biological role, plays a role in microtubule organization and/or maintenance for the formation of primary cilia (PC), a microtubule-based structure that protrudes from the surface of epithelial cells. Plays a critical role in G2/M checkpoint and nuclear divisions. A key player in the DNA damage-activated ATR/ATM signaling cascade since it is required for the proper phosphorylation of H2AX, RPA, CHEK2 and CHEK1. Plays a critical role in chromosome segregation, acting as a mediator required for the maintenance of genomic stability through modulation of MDC1, RPA and CHEK1. The sequence is that of Centrosomal protein of 164 kDa (CEP164) from Homo sapiens (Human).